Reading from the N-terminus, the 325-residue chain is Gibberellin 20-oxidase-like protein (325 aa).

The region spanning 152–266 (CHGYFRINNY…RFSLAFFWCF (115 aa)) is the Fe2OG dioxygenase domain. His186, Asp188, and His244 together coordinate Fe cation. Arg257 provides a ligand contact to 2-oxoglutarate.

The protein belongs to the iron/ascorbate-dependent oxidoreductase family. GA20OX subfamily. It depends on Fe(2+) as a cofactor. In terms of tissue distribution, highly expressed in elongation zone of lateral roots.

Functionally, negative regulator of root hair growth. This is Gibberellin 20-oxidase-like protein from Arabidopsis thaliana (Mouse-ear cress).